Here is a 562-residue protein sequence, read N- to C-terminus: Dihydroxy-acid dehydratase (562 aa).

Cys53 is a [2Fe-2S] cluster binding site. Mg(2+) is bound at residue Asp85. Cys126 provides a ligand contact to [2Fe-2S] cluster. Mg(2+) is bound by residues Asp127 and Lys128. Lys128 bears the N6-carboxylysine mark. Cys198 is a [2Fe-2S] cluster binding site. Glu449 lines the Mg(2+) pocket. Ser475 acts as the Proton acceptor in catalysis.

Belongs to the IlvD/Edd family. Homodimer. Requires [2Fe-2S] cluster as cofactor. Mg(2+) serves as cofactor.

It carries out the reaction (2R)-2,3-dihydroxy-3-methylbutanoate = 3-methyl-2-oxobutanoate + H2O. It catalyses the reaction (2R,3R)-2,3-dihydroxy-3-methylpentanoate = (S)-3-methyl-2-oxopentanoate + H2O. It functions in the pathway amino-acid biosynthesis; L-isoleucine biosynthesis; L-isoleucine from 2-oxobutanoate: step 3/4. It participates in amino-acid biosynthesis; L-valine biosynthesis; L-valine from pyruvate: step 3/4. Functionally, functions in the biosynthesis of branched-chain amino acids. Catalyzes the dehydration of (2R,3R)-2,3-dihydroxy-3-methylpentanoate (2,3-dihydroxy-3-methylvalerate) into 2-oxo-3-methylpentanoate (2-oxo-3-methylvalerate) and of (2R)-2,3-dihydroxy-3-methylbutanoate (2,3-dihydroxyisovalerate) into 2-oxo-3-methylbutanoate (2-oxoisovalerate), the penultimate precursor to L-isoleucine and L-valine, respectively. This is Dihydroxy-acid dehydratase from Methylococcus capsulatus (strain ATCC 33009 / NCIMB 11132 / Bath).